Reading from the N-terminus, the 260-residue chain is Metallo-beta-lactamase domain-containing protein 1 (260 aa).

Zn(2+) is bound by residues His-118, His-120, Asp-122, His-123, His-173, Asp-196, and His-235.

This sequence belongs to the metallo-beta-lactamase superfamily. Glyoxalase II family. Homodimer. Zn(2+) serves as cofactor.

It localises to the cytoplasm. The protein localises to the cytosol. Its subcellular location is the nucleus. The enzyme catalyses a ribonucleotidyl-ribonucleotide-RNA + H2O = a 3'-end ribonucleotide-RNA + a 5'-end 5'-phospho-ribonucleoside-RNA + H(+). Functionally, endoribonuclease that catalyzes the hydrolysis of histone-coding pre-mRNA 3'-end. Involved in histone pre-mRNA processing during the S-phase of the cell cycle, which is required for entering/progressing through S-phase. Cleaves histone pre-mRNA at a major and a minor cleavage site after the 5'-ACCCA-3' and the 5'-ACCCACA-3' sequence, respectively, and located downstream of the stem-loop. May require the presence of the HDE element located at the histone pre-RNA 3'-end to avoid non-specific cleavage. This chain is Metallo-beta-lactamase domain-containing protein 1, found in Mus musculus (Mouse).